We begin with the raw amino-acid sequence, 262 residues long: LOB domain-containing protein 18 (262 aa).

Residues 36 to 138 (GPCGACKFLR…AEVSYLQAHL (103 aa)) form the LOB domain. Residues 223-262 (VGLGGENSHDLQALAHELLHRQGSPPPAATDHSPSRTMSR) form a disordered region.

The protein belongs to the LOB domain-containing protein family. Homodimer and heterodimer with LBD16. Interacts with GIP1. In terms of tissue distribution, expressed in roots, stems, leaves and flowers. Expressed in vascular tissues of hypocotyls, leaves, roots, developing floral organs and siliques.

It localises to the nucleus. In terms of biological role, involved in the positive regulation of tracheary element (TE) differentiation. Involved in a positive feedback loop that maintains or promotes NAC030/VND7 expression that regulates TE differentiation-related genes. Functions in the initiation and emergence of lateral roots, in conjunction with LBD16, downstream of ARF7 and ARF19. Transcriptional activator that directly regulates EXPA14, a gene encoding a cell wall-loosening factor that promotes lateral root emergence. Activates EXPA14 by directly binding to a specific region of its promoter. Transcriptional activator that directly regulates EXPA17, a gene encoding a cell wall-loosening factor that promotes lateral root emergence. Acts downstream of the auxin influx carriers AUX1 and LAX1 in the regulation of lateral root initiation and development. The sequence is that of LOB domain-containing protein 18 (LBD18) from Arabidopsis thaliana (Mouse-ear cress).